A 214-amino-acid polypeptide reads, in one-letter code: Redox-sensing transcriptional repressor Rex (214 aa).

Residues 17 to 56 (LYYRIFKRFHADQVEKASSKQIADAMGIDSATVRRDFSYF) constitute a DNA-binding region (H-T-H motif). 91-96 (GCGNIG) provides a ligand contact to NAD(+).

The protein belongs to the transcriptional regulatory Rex family. Homodimer.

It is found in the cytoplasm. Its function is as follows. Modulates transcription in response to changes in cellular NADH/NAD(+) redox state. The protein is Redox-sensing transcriptional repressor Rex of Streptococcus pyogenes serotype M12 (strain MGAS9429).